The chain runs to 118 residues: MSDNPQEYELDWDVEKRLKLNDAGLVPAIVQADGTNEVLMMAWMDTHALAYTLATRRGTYFSRSRNEYWIKGLTSGNVQEVTGVALDCDGDTVLLTVKQTGGACHTGAHTCFDNDVLL.

A Mg(2+)-binding site is contributed by D87. C88 serves as a coordination point for Zn(2+). Residues D89 and D91 each contribute to the Mg(2+) site. 2 residues coordinate Zn(2+): C104 and C111.

This sequence belongs to the PRA-CH family. In terms of assembly, homodimer. The cofactor is Mg(2+). It depends on Zn(2+) as a cofactor.

The protein localises to the cytoplasm. The catalysed reaction is 1-(5-phospho-beta-D-ribosyl)-5'-AMP + H2O = 1-(5-phospho-beta-D-ribosyl)-5-[(5-phospho-beta-D-ribosylamino)methylideneamino]imidazole-4-carboxamide. It functions in the pathway amino-acid biosynthesis; L-histidine biosynthesis; L-histidine from 5-phospho-alpha-D-ribose 1-diphosphate: step 3/9. Its function is as follows. Catalyzes the hydrolysis of the adenine ring of phosphoribosyl-AMP. The protein is Phosphoribosyl-AMP cyclohydrolase of Corynebacterium glutamicum (strain R).